Consider the following 217-residue polypeptide: Thiopurine S-methyltransferase (217 aa).

Residues Trp-11, Leu-46, Glu-67, and Arg-122 each contribute to the S-adenosyl-L-methionine site.

It belongs to the class I-like SAM-binding methyltransferase superfamily. TPMT family.

The protein localises to the cytoplasm. The catalysed reaction is S-adenosyl-L-methionine + a thiopurine = S-adenosyl-L-homocysteine + a thiopurine S-methylether.. This Vibrio atlanticus (strain LGP32) (Vibrio splendidus (strain Mel32)) protein is Thiopurine S-methyltransferase.